We begin with the raw amino-acid sequence, 400 residues long: S-adenosylmethionine sensor upstream of mTORC1 (400 aa).

S-adenosyl-L-methionine contacts are provided by Arg-99, Gly-168, Asp-186, Asp-198, Phe-199, and Ser-240.

This sequence belongs to the BMT2/SAMTOR family. As to quaternary structure, interacts with the GATOR1 complex; interaction is disrupted when samtor binds S-adenosyl-L-methionine. Interacts with the KICSTOR complex; interaction is disrupted when samtor binds S-adenosyl-L-methionine.

S-adenosyl-L-methionine-binding protein that acts as an inhibitor of mTORC1 signaling via interaction with the GATOR1 and KICSTOR complexes. Acts as a sensor of S-adenosyl-L-methionine to signal methionine sufficiency to mTORC1: in presence of methionine, binds S-adenosyl-L-methionine, leading to disrupt interaction with the GATOR1 and KICSTOR complexes and promote mTORC1 signaling. Upon methionine starvation, S-adenosyl-L-methionine levels are reduced, thereby promoting the association with GATOR1 and KICSTOR, leading to inhibit mTORC1 signaling. Probably also acts as a S-adenosyl-L-methionine-dependent methyltransferase. The chain is S-adenosylmethionine sensor upstream of mTORC1 from Xenopus laevis (African clawed frog).